Reading from the N-terminus, the 648-residue chain is p-hydroxybenzoic acid efflux pump subunit AaeB (648 aa).

Helical transmembrane passes span 11 to 31 (FACK…YFGL), 41 to 61 (AALV…SGAI), 65 to 87 (GWLR…MLLI), 91 to 110 (LLMI…LSSL), 125 to 145 (TALI…QLAL), 150 to 170 (EIVL…PRSV), 369 to 389 (LFWL…IAVV), 406 to 426 (FLMG…LILP), 430 to 450 (QSLV…GMAV), 458 to 478 (MGTL…GFPI), and 481 to 501 (FVDS…VLLV).

Belongs to the aromatic acid exporter ArAE (TC 2.A.85) family.

It is found in the cell inner membrane. Forms an efflux pump with AaeA. Could function as a metabolic relief valve, allowing to eliminate certain compounds when they accumulate to high levels in the cell. In Edwardsiella ictaluri (strain 93-146), this protein is p-hydroxybenzoic acid efflux pump subunit AaeB.